The chain runs to 397 residues: Argininosuccinate synthase (397 aa).

8–16 (AYSGGLDTS) provides a ligand contact to ATP. Positions 86 and 91 each coordinate L-citrulline. An ATP-binding site is contributed by Gly116. The L-aspartate site is built by Thr118, Asn122, and Asp123. Asn122 contributes to the L-citrulline binding site. The L-citrulline site is built by Arg126, Ser175, Ser184, Glu260, and Tyr272.

The protein belongs to the argininosuccinate synthase family. Type 1 subfamily. As to quaternary structure, homotetramer.

It localises to the cytoplasm. The catalysed reaction is L-citrulline + L-aspartate + ATP = 2-(N(omega)-L-arginino)succinate + AMP + diphosphate + H(+). The protein operates within amino-acid biosynthesis; L-arginine biosynthesis; L-arginine from L-ornithine and carbamoyl phosphate: step 2/3. The polypeptide is Argininosuccinate synthase (Clostridium botulinum (strain Okra / Type B1)).